Reading from the N-terminus, the 119-residue chain is Large ribosomal subunit protein uL18 (119 aa).

It belongs to the universal ribosomal protein uL18 family. In terms of assembly, part of the 50S ribosomal subunit; part of the 5S rRNA/L5/L18/L25 subcomplex. Contacts the 5S and 23S rRNAs.

Functionally, this is one of the proteins that bind and probably mediate the attachment of the 5S RNA into the large ribosomal subunit, where it forms part of the central protuberance. This chain is Large ribosomal subunit protein uL18, found in Clostridium botulinum (strain Alaska E43 / Type E3).